A 363-amino-acid polypeptide reads, in one-letter code: MESYLTKWCVVLVLLCFGFSVVKAQAQAQVPCFFVFGDSLVDNGNNNGLISIARSNYFPYGIDFGGPTGRFSNGKTTVDVIAELLGFNGYIPAYNTVSGRQILSGVNYASAAAGIREETGRQLGQRISFSGQVRNYQTTVSQVVQLLGDETRAADYLKRCIYSVGLGSNDYLNNYFMPTFYSSSRQFTPEQYANDLISRYSTQLNALYNYGARKFALSGIGAVGCSPNALAGSPDGRTCVDRINSANQIFNNKLRSLVDQLNNNHPDAKFIYINAYGIFQDMITNPARFGFRVTNAGCCGIGRNAGQITCLPGQRPCRDRNAYVFWDAFHPTEAANVIIARRSYNAQSASDAYPMDISRLAQL.

Positions 1-24 (MESYLTKWCVVLVLLCFGFSVVKA) are cleaved as a signal peptide. Serine 39 acts as the Nucleophile in catalysis. Residues aspartate 327 and histidine 330 contribute to the active site.

It belongs to the 'GDSL' lipolytic enzyme family.

The protein resides in the secreted. This Arabidopsis thaliana (Mouse-ear cress) protein is GDSL esterase/lipase At1g29670.